We begin with the raw amino-acid sequence, 61 residues long: Probable tautomerase BA_5626/GBAA_5626/BAS5226 (61 aa).

The Proton acceptor; via imino nitrogen role is filled by proline 2.

This sequence belongs to the 4-oxalocrotonate tautomerase family.

The polypeptide is Probable tautomerase BA_5626/GBAA_5626/BAS5226 (Bacillus anthracis).